The chain runs to 329 residues: Minor capsid protein A1 (329 aa).

Residues 143 to 162 (GPSPVPGPNPDPPLEPPPGT) form a disordered region. A compositionally biased stretch (pro residues) spans 145–161 (SPVPGPNPDPPLEPPPG).

Its subcellular location is the virion. Minor capsid protein. In Qbeta virus (strain MX1), this protein is Minor capsid protein A1.